A 184-amino-acid polypeptide reads, in one-letter code: Cell number regulator 5 (184 aa).

Residues 91–111 (MLWGLLTSLCCVFTGGLVLAV) form a helical membrane-spanning segment. The segment at 162–184 (RTGSGSSPAPNVTPPPVQTMDEL) is disordered.

This sequence belongs to the cornifelin family. Expressed in roots, leaves, stalks, immature ears, endosperm and pollen.

Its subcellular location is the membrane. The chain is Cell number regulator 5 (CNR5) from Zea mays (Maize).